The primary structure comprises 314 residues: Ribosomal RNA small subunit methyltransferase H (314 aa).

S-adenosyl-L-methionine contacts are provided by residues 34 to 36 (GGH), Asp-54, Phe-83, Asp-104, and Gln-111.

The protein belongs to the methyltransferase superfamily. RsmH family.

Its subcellular location is the cytoplasm. It carries out the reaction cytidine(1402) in 16S rRNA + S-adenosyl-L-methionine = N(4)-methylcytidine(1402) in 16S rRNA + S-adenosyl-L-homocysteine + H(+). Its function is as follows. Specifically methylates the N4 position of cytidine in position 1402 (C1402) of 16S rRNA. The polypeptide is Ribosomal RNA small subunit methyltransferase H (Ligilactobacillus salivarius (strain UCC118) (Lactobacillus salivarius)).